Reading from the N-terminus, the 386-residue chain is Aspartate carbamoyltransferase 1, chloroplastic (386 aa).

Residues 1-39 (MTVASMLSSNSMNVGVSNPKMSSKTSACCLLNRPWPSSC) constitute a chloroplast transit peptide. The carbamoyl phosphate site is built by R132 and T133. The UMP site is built by R132 and T133. Position 162 (K162) interacts with L-aspartate. The carbamoyl phosphate site is built by R183, H211, and Q214. UMP contacts are provided by R183 and H211. Residues R244 and R306 each coordinate UMP. Positions 244 and 306 each coordinate L-aspartate. Carbamoyl phosphate contacts are provided by L346 and P347.

It belongs to the aspartate/ornithine carbamoyltransferase superfamily. ATCase family. As to quaternary structure, homotrimer.

It is found in the plastid. It localises to the chloroplast. It catalyses the reaction carbamoyl phosphate + L-aspartate = N-carbamoyl-L-aspartate + phosphate + H(+). It participates in pyrimidine metabolism; UMP biosynthesis via de novo pathway; (S)-dihydroorotate from bicarbonate: step 2/3. Its activity is regulated as follows. Feedback inhibited by UMP. Its function is as follows. Catalyzes the condensation of carbamoyl phosphate and aspartate to form carbamoyl aspartate and inorganic phosphate, the committed step in the de novo pyrimidine nucleotide biosynthesis pathway. The protein is Aspartate carbamoyltransferase 1, chloroplastic (PYRB1) of Pisum sativum (Garden pea).